The primary structure comprises 646 residues: Cartilage acidic protein 1 (646 aa).

The signal sequence occupies residues 1–28 (MAPSADPGMVRMALLLLPPLWLLPLTGG). An FG-GAP 1; atypical repeat occupies 47 to 89 (DYDSNPTQLNYGVAVTDVDHDGDFEIVVAGYTGPNLVLKYNRA). An FG-GAP 2; atypical repeat occupies 106 to 148 (YALRDRQGNAIGVTACDIDGDGREEIYFLNTNNAFSGVATYTD). The FG-GAP 3; atypical repeat unit spans residues 284–334 (AGVDDPHQHGRGVALADFNRDGKVDIVYGNWNGPHRLYLQMSAHGKVRFRD). The stretch at 396–438 (GDALEPEGRGTGGVVTDFDGDGMLDLILSHGESMAQPLSVFRG) is one FG-GAP 4; atypical repeat. In terms of domain architecture, EGF-like spans 560 to 606 (DTNECIQFPFVCPRDKPVCVNTYGSYRCRTNKRCNRGYEPNEDGTAC). 3 cysteine pairs are disulfide-bonded: cysteine 564–cysteine 578, cysteine 571–cysteine 587, and cysteine 593–cysteine 606.

It localises to the secreted. The protein resides in the extracellular space. It is found in the extracellular matrix. In Mus musculus (Mouse), this protein is Cartilage acidic protein 1 (Crtac1).